The following is a 141-amino-acid chain: Putative pre-16S rRNA nuclease (141 aa).

The protein belongs to the YqgF nuclease family.

It is found in the cytoplasm. Its function is as follows. Could be a nuclease involved in processing of the 5'-end of pre-16S rRNA. The protein is Putative pre-16S rRNA nuclease of Acetivibrio thermocellus (strain ATCC 27405 / DSM 1237 / JCM 9322 / NBRC 103400 / NCIMB 10682 / NRRL B-4536 / VPI 7372) (Clostridium thermocellum).